The following is a 387-amino-acid chain: TSC22 domain family protein 4 (387 aa).

2 disordered regions span residues 1–85 (MSGG…GEPY) and 135–232 (ISTP…RRDG). Pro residues predominate over residues 31–51 (PVPPALAGPPPRLPNGDPNPD). Position 57 is a phosphothreonine (threonine 57). Phosphoserine occurs at positions 62 and 165. Threonine 183 bears the Phosphothreonine mark. Phosphoserine occurs at positions 187, 189, and 219. Threonine 223 is modified (phosphothreonine). 3 positions are modified to phosphoserine: serine 254, serine 258, and serine 271. The segment at 336 to 357 (LKEQIRDLAERNAALEQENGLL) is leucine-zipper. Position 362 is a phosphoserine (serine 362). Residues 368–387 (QLPSSGLPRLGPSAPNGPSI) are disordered.

Belongs to the TSC-22/Dip/Bun family. As to quaternary structure, forms a homodimer or heterodimer. Forms a heterodimer with TSC22D1 isoforms 1 and 2. Interacts with NRBP1. Expressed in the liver (at protein level). Expressed in Purkinje cells and proliferating cerebellar granular neurons (at protein level). Expressed in the cortex, medulla and papilla of the kidney.

Its subcellular location is the nucleus. It localises to the cytoplasm. The protein resides in the cell projection. The protein localises to the dendrite. It is found in the synapse. In terms of biological role, binds DNA and acts as a transcriptional repressor. Involved in the regulation of systematic glucose homeostasis and insulin sensitivity, via transcriptional repression of downstream insulin signaling targets such as OBP2A/LCN13. Acts as a negative regulator of lipogenic gene expression in hepatocytes and thereby mediates the control of very low-density lipoprotein release. May play a role in neurite elongation and survival. In Mus musculus (Mouse), this protein is TSC22 domain family protein 4.